Reading from the N-terminus, the 108-residue chain is Large ribosomal subunit protein uL23 (108 aa).

Belongs to the universal ribosomal protein uL23 family. As to quaternary structure, part of the 50S ribosomal subunit. Contacts protein L29, and trigger factor when it is bound to the ribosome.

Its function is as follows. One of the early assembly proteins it binds 23S rRNA. One of the proteins that surrounds the polypeptide exit tunnel on the outside of the ribosome. Forms the main docking site for trigger factor binding to the ribosome. This Leptothrix cholodnii (strain ATCC 51168 / LMG 8142 / SP-6) (Leptothrix discophora (strain SP-6)) protein is Large ribosomal subunit protein uL23.